The chain runs to 66 residues: Photosystem II reaction center protein J (66 aa).

Residues 37 to 57 (LWLVATAGGMAVIFVVGLFFY) form a helical membrane-spanning segment.

It belongs to the PsbJ family. As to quaternary structure, PSII is composed of 1 copy each of membrane proteins PsbA, PsbB, PsbC, PsbD, PsbE, PsbF, PsbH, PsbI, PsbJ, PsbK, PsbL, PsbM, PsbT, PsbX, PsbY, PsbZ, Psb30/Ycf12, peripheral proteins PsbO, CyanoQ (PsbQ), PsbU, PsbV and a large number of cofactors. It forms dimeric complexes.

The protein resides in the cellular thylakoid membrane. Its function is as follows. One of the components of the core complex of photosystem II (PSII). PSII is a light-driven water:plastoquinone oxidoreductase that uses light energy to abstract electrons from H(2)O, generating O(2) and a proton gradient subsequently used for ATP formation. It consists of a core antenna complex that captures photons, and an electron transfer chain that converts photonic excitation into a charge separation. The polypeptide is Photosystem II reaction center protein J (Synechococcus sp. (strain CC9311)).